The following is a 406-amino-acid chain: Cysteine desulfurase (406 aa).

The residue at position 226 (lysine 226) is an N6-(pyridoxal phosphate)lysine. Cysteine 364 functions as the Cysteine persulfide intermediate in the catalytic mechanism.

This sequence belongs to the class-V pyridoxal-phosphate-dependent aminotransferase family. Csd subfamily. In terms of assembly, homodimer. Interacts with SufE and the SufBCD complex composed of SufB, SufC and SufD. The interaction with SufE is required to mediate the direct transfer of the sulfur atom from the S-sulfanylcysteine. It depends on pyridoxal 5'-phosphate as a cofactor.

It is found in the cytoplasm. The catalysed reaction is (sulfur carrier)-H + L-cysteine = (sulfur carrier)-SH + L-alanine. It carries out the reaction L-selenocysteine + AH2 = hydrogenselenide + L-alanine + A + H(+). Its pathway is cofactor biosynthesis; iron-sulfur cluster biosynthesis. Cysteine desulfurases mobilize the sulfur from L-cysteine to yield L-alanine, an essential step in sulfur metabolism for biosynthesis of a variety of sulfur-containing biomolecules. Component of the suf operon, which is activated and required under specific conditions such as oxidative stress and iron limitation. Acts as a potent selenocysteine lyase in vitro, that mobilizes selenium from L-selenocysteine. Selenocysteine lyase activity is however unsure in vivo. The chain is Cysteine desulfurase from Klebsiella pneumoniae (strain 342).